A 156-amino-acid chain; its full sequence is Small ribosomal subunit protein uS7 (156 aa).

This sequence belongs to the universal ribosomal protein uS7 family. Part of the 30S ribosomal subunit. Contacts proteins S9 and S11.

Its function is as follows. One of the primary rRNA binding proteins, it binds directly to 16S rRNA where it nucleates assembly of the head domain of the 30S subunit. Is located at the subunit interface close to the decoding center, probably blocks exit of the E-site tRNA. The polypeptide is Small ribosomal subunit protein uS7 (Treponema denticola (strain ATCC 35405 / DSM 14222 / CIP 103919 / JCM 8153 / KCTC 15104)).